We begin with the raw amino-acid sequence, 168 residues long: Protein-export protein SecB (168 aa).

Positions 1–10 (MSDQGTNNGE) are enriched in polar residues. The interval 1–22 (MSDQGTNNGESGNGGAQNGEAP) is disordered.

Belongs to the SecB family. In terms of assembly, homotetramer, a dimer of dimers. One homotetramer interacts with 1 SecA dimer.

The protein resides in the cytoplasm. In terms of biological role, one of the proteins required for the normal export of preproteins out of the cell cytoplasm. It is a molecular chaperone that binds to a subset of precursor proteins, maintaining them in a translocation-competent state. It also specifically binds to its receptor SecA. The chain is Protein-export protein SecB from Parvibaculum lavamentivorans (strain DS-1 / DSM 13023 / NCIMB 13966).